Reading from the N-terminus, the 980-residue chain is Conserved oligomeric Golgi complex subunit 1 (980 aa).

Alanine 2 carries the post-translational modification N-acetylalanine. Serine 7 is modified (phosphoserine). Lysine 598 carries the post-translational modification N6-acetyllysine. Residues 923 to 934 show a composition bias toward polar residues; sequence RATSRSVETQAQ. The tract at residues 923–950 is disordered; the sequence is RATSRSVETQAQVGPPALSRVGDPTTHP.

Belongs to the COG1 family. In terms of assembly, component of the conserved oligomeric Golgi complex which is composed of eight different subunits and is required for normal Golgi morphology and localization.

The protein localises to the golgi apparatus membrane. Its function is as follows. Required for normal Golgi function. This Mus musculus (Mouse) protein is Conserved oligomeric Golgi complex subunit 1 (Cog1).